A 282-amino-acid chain; its full sequence is Acetyl-coenzyme A carboxylase carboxyl transferase subunit beta (282 aa).

Residues 29–282 (LPINCPSCSA…LSSLLGLHQG (254 aa)) enclose the CoA carboxyltransferase N-terminal domain. Residues cysteine 33, cysteine 36, cysteine 52, and cysteine 55 each contribute to the Zn(2+) site. The segment at 33 to 55 (CPSCSARIAAEALQRNLKVCPKC) adopts a C4-type zinc-finger fold.

Belongs to the AccD/PCCB family. Acetyl-CoA carboxylase is a heterohexamer composed of biotin carboxyl carrier protein (AccB), biotin carboxylase (AccC) and two subunits each of ACCase subunit alpha (AccA) and ACCase subunit beta (AccD). The cofactor is Zn(2+).

It localises to the cytoplasm. It carries out the reaction N(6)-carboxybiotinyl-L-lysyl-[protein] + acetyl-CoA = N(6)-biotinyl-L-lysyl-[protein] + malonyl-CoA. Its pathway is lipid metabolism; malonyl-CoA biosynthesis; malonyl-CoA from acetyl-CoA: step 1/1. In terms of biological role, component of the acetyl coenzyme A carboxylase (ACC) complex. Biotin carboxylase (BC) catalyzes the carboxylation of biotin on its carrier protein (BCCP) and then the CO(2) group is transferred by the transcarboxylase to acetyl-CoA to form malonyl-CoA. This chain is Acetyl-coenzyme A carboxylase carboxyl transferase subunit beta, found in Syntrophomonas wolfei subsp. wolfei (strain DSM 2245B / Goettingen).